The chain runs to 249 residues: Ubiquinone biosynthesis O-methyltransferase (249 aa).

R44, G75, D96, and M138 together coordinate S-adenosyl-L-methionine.

This sequence belongs to the methyltransferase superfamily. UbiG/COQ3 family.

It catalyses the reaction a 3-demethylubiquinol + S-adenosyl-L-methionine = a ubiquinol + S-adenosyl-L-homocysteine + H(+). It carries out the reaction a 3-(all-trans-polyprenyl)benzene-1,2-diol + S-adenosyl-L-methionine = a 2-methoxy-6-(all-trans-polyprenyl)phenol + S-adenosyl-L-homocysteine + H(+). It functions in the pathway cofactor biosynthesis; ubiquinone biosynthesis. Its function is as follows. O-methyltransferase that catalyzes the 2 O-methylation steps in the ubiquinone biosynthetic pathway. The polypeptide is Ubiquinone biosynthesis O-methyltransferase (Paramagnetospirillum magneticum (strain ATCC 700264 / AMB-1) (Magnetospirillum magneticum)).